A 247-amino-acid polypeptide reads, in one-letter code: UPF0280 protein MmarC5_0355 (247 aa).

This sequence belongs to the UPF0280 family.

The polypeptide is UPF0280 protein MmarC5_0355 (Methanococcus maripaludis (strain C5 / ATCC BAA-1333)).